The chain runs to 695 residues: Segment polarity protein dishevelled homolog DVL-1 (695 aa).

The region spanning 1–85 (MAETKIIYHM…RVVSWLVLAE (85 aa)) is the DIX domain. The interval 89-235 (SDAGSQGTDS…QRLRQTDRAS (147 aa)) is disordered. A compositionally biased stretch (basic residues) spans 142 to 151 (SHRRERARRR). The span at 152–171 (NRDEAARTNGHPRGDRRRDL) shows a compositional bias: basic and acidic residues. The segment covering 177 to 192 (SASTVLSSELESSSFI) has biased composition (low complexity). Ser-194 carries the post-translational modification Phosphoserine. Low complexity predominate over residues 201 to 214 (SRLSSSTEQSTSSR). Over residues 215-228 (LVRKHKCRRRKQRL) the composition is skewed to basic residues. Residues 251–323 (TVTLNMERHH…NDDAVRVLRE (73 aa)) form the PDZ domain. The DEP domain occupies 425-499 (PDSGLEIRDR…SEQCYYVFGD (75 aa)). The segment covering 559–580 (SCGSGSAGSQQSEGSKSSGSTR) has biased composition (low complexity). The tract at residues 559 to 641 (SCGSGSAGSQ…SQASAVAPGL (83 aa)) is disordered. Residues 622–635 (SQLSRGSSPRSQAS) show a composition bias toward polar residues.

Belongs to the DSH family. In terms of assembly, interacts with CXXC4. Interacts (via PDZ domain) with TMEM88. Interacts with BRD7 and INVS. Interacts (via PDZ domain) with VANGL1 and VANGL2 (via C-terminus). Interacts (via PDZ domain) with NXN. Interacts with ARRB1; the interaction is enhanced by phosphorylation of DVL1. Interacts with CYLD. Interacts (via PDZ domain) with RYK. Self-associates (via DIX domain) and forms higher homooligomers. Interacts (via PDZ domain) with DACT1 and FZD7, where DACT1 and FZD7 compete for the same binding site. Interacts (via DEP domain) with MUSK; the interaction is direct and mediates the formation a DVL1, MUSK and PAK1 ternary complex involved in AChR clustering. Interacts with DCDC2. Interacts with FOXK2. Interacts with PKD1 (via extracellular domain). Interacts (via PDZ domain) with CCDC88C/DAPLE; competes with CCDC88C for binding to frizzled receptor FZD7 and dissociates from CCDC88C following initiation of non-canonical Wnt signaling when CCDC88C displaces DVL1 from ligand-activated FZD7. In terms of processing, ubiquitinated; undergoes both 'Lys-48'-linked ubiquitination, leading to its subsequent degradation by the ubiquitin-proteasome pathway, and 'Lys-63'-linked ubiquitination. The interaction with INVS is required for ubiquitination. Deubiquitinated by CYLD, which acts on 'Lys-63'-linked ubiquitin chains. High levels are seen in the brain, testis and kidney, lower levels in the ovary, breast, muscle, liver and small intestine, and very low levels are seen in the spleen and thymus. A moderate level expression is seen in the heart.

It is found in the cell membrane. It localises to the cytoplasm. The protein localises to the cytosol. The protein resides in the cytoplasmic vesicle. Functionally, participates in Wnt signaling by binding to the cytoplasmic C-terminus of frizzled family members and transducing the Wnt signal to down-stream effectors. Plays a role both in canonical and non-canonical Wnt signaling. Plays a role in the signal transduction pathways mediated by multiple Wnt genes. Required for LEF1 activation upon WNT1 and WNT3A signaling. DVL1 and PAK1 form a ternary complex with MUSK which is important for MUSK-dependent regulation of AChR clustering during the formation of the neuromuscular junction (NMJ). This Mus musculus (Mouse) protein is Segment polarity protein dishevelled homolog DVL-1 (Dvl1).